A 21-amino-acid polypeptide reads, in one-letter code: Venom peptide Tv1 (21 aa).

Cystine bridges form between C4/C20, C5/C21, and C7/C16.

In terms of tissue distribution, expressed by the salivary gland. This peptide is considered as a venom peptide.

Its subcellular location is the secreted. Its function is as follows. Injections of 20 uM of this synthetic peptide (Ile) causes partial paralysis to polychaete worms (Nereis virens), the natural prey of terebrid snails. This paralysis may be due to an inhibition of nicotinic receptors at the neuromuscular junction. The sequence is that of Venom peptide Tv1 from Terebra variegata (Variegate auger snail).